Consider the following 182-residue polypeptide: Large ribosomal subunit protein uL6 (182 aa).

This sequence belongs to the universal ribosomal protein uL6 family. As to quaternary structure, part of the 50S ribosomal subunit.

This protein binds to the 23S rRNA, and is important in its secondary structure. It is located near the subunit interface in the base of the L7/L12 stalk, and near the tRNA binding site of the peptidyltransferase center. The protein is Large ribosomal subunit protein uL6 of Methanococcus vannielii.